The sequence spans 428 residues: Enolase (428 aa).

Gln-163 contacts (2R)-2-phosphoglycerate. The active-site Proton donor is the Glu-205. Positions 242, 283, and 310 each coordinate Mg(2+). 4 residues coordinate (2R)-2-phosphoglycerate: Lys-335, Arg-364, Ser-365, and Lys-386. Residue Lys-335 is the Proton acceptor of the active site.

Belongs to the enolase family. Requires Mg(2+) as cofactor.

The protein localises to the cytoplasm. Its subcellular location is the secreted. It localises to the cell surface. It carries out the reaction (2R)-2-phosphoglycerate = phosphoenolpyruvate + H2O. The protein operates within carbohydrate degradation; glycolysis; pyruvate from D-glyceraldehyde 3-phosphate: step 4/5. Functionally, catalyzes the reversible conversion of 2-phosphoglycerate (2-PG) into phosphoenolpyruvate (PEP). It is essential for the degradation of carbohydrates via glycolysis. The protein is Enolase of Streptomyces avermitilis (strain ATCC 31267 / DSM 46492 / JCM 5070 / NBRC 14893 / NCIMB 12804 / NRRL 8165 / MA-4680).